The sequence spans 324 residues: Lipoyl synthase, chloroplastic (324 aa).

Low complexity-rich tracts occupy residues methionine 1–alanine 12 and lysine 20–proline 29. Residues methionine 1 to proline 30 are disordered. [4Fe-4S] cluster-binding residues include cysteine 58, cysteine 63, cysteine 69, cysteine 86, cysteine 90, cysteine 93, and serine 302. Residues glycine 72–arginine 291 form the Radical SAM core domain.

The protein belongs to the radical SAM superfamily. Lipoyl synthase family. [4Fe-4S] cluster serves as cofactor.

It is found in the plastid. Its subcellular location is the chloroplast. The catalysed reaction is [[Fe-S] cluster scaffold protein carrying a second [4Fe-4S](2+) cluster] + N(6)-octanoyl-L-lysyl-[protein] + 2 oxidized [2Fe-2S]-[ferredoxin] + 2 S-adenosyl-L-methionine + 4 H(+) = [[Fe-S] cluster scaffold protein] + N(6)-[(R)-dihydrolipoyl]-L-lysyl-[protein] + 4 Fe(3+) + 2 hydrogen sulfide + 2 5'-deoxyadenosine + 2 L-methionine + 2 reduced [2Fe-2S]-[ferredoxin]. Its pathway is protein modification; protein lipoylation via endogenous pathway; protein N(6)-(lipoyl)lysine from octanoyl-[acyl-carrier-protein]: step 2/2. Its function is as follows. Catalyzes the radical-mediated insertion of two sulfur atoms into the C-6 and C-8 positions of the octanoyl moiety bound to the lipoyl domains of lipoate-dependent enzymes, thereby converting the octanoylated domains into lipoylated derivatives. This is Lipoyl synthase, chloroplastic from Ostreococcus lucimarinus (strain CCE9901).